A 199-amino-acid chain; its full sequence is FMN-dependent NADH:quinone oxidoreductase (199 aa).

Serine 10 serves as a coordination point for FMN.

It belongs to the azoreductase type 1 family. As to quaternary structure, homodimer. The cofactor is FMN.

It carries out the reaction 2 a quinone + NADH + H(+) = 2 a 1,4-benzosemiquinone + NAD(+). It catalyses the reaction N,N-dimethyl-1,4-phenylenediamine + anthranilate + 2 NAD(+) = 2-(4-dimethylaminophenyl)diazenylbenzoate + 2 NADH + 2 H(+). Quinone reductase that provides resistance to thiol-specific stress caused by electrophilic quinones. Functionally, also exhibits azoreductase activity. Catalyzes the reductive cleavage of the azo bond in aromatic azo compounds to the corresponding amines. The chain is FMN-dependent NADH:quinone oxidoreductase from Cellvibrio japonicus (strain Ueda107) (Pseudomonas fluorescens subsp. cellulosa).